Reading from the N-terminus, the 354-residue chain is DNA polymerase IV (354 aa).

Residues 8–189 (IIHIDMDCFY…LPLQKIPGVG (182 aa)) form the UmuC domain. Positions 12 and 107 each coordinate Mg(2+). Residue E108 is part of the active site.

The protein belongs to the DNA polymerase type-Y family. In terms of assembly, monomer. It depends on Mg(2+) as a cofactor.

The protein resides in the cytoplasm. It catalyses the reaction DNA(n) + a 2'-deoxyribonucleoside 5'-triphosphate = DNA(n+1) + diphosphate. Poorly processive, error-prone DNA polymerase involved in untargeted mutagenesis. Copies undamaged DNA at stalled replication forks, which arise in vivo from mismatched or misaligned primer ends. These misaligned primers can be extended by PolIV. Exhibits no 3'-5' exonuclease (proofreading) activity. May be involved in translesional synthesis, in conjunction with the beta clamp from PolIII. This Vibrio vulnificus (strain CMCP6) protein is DNA polymerase IV.